A 1513-amino-acid polypeptide reads, in one-letter code: DNA-directed RNA polymerase subunit beta'' (1513 aa).

Cysteine 220, cysteine 296, cysteine 303, and cysteine 306 together coordinate Zn(2+). The segment at 644-769 (RTREKDSENE…EYGNPEEDSV (126 aa)) is disordered. Basic and acidic residues predominate over residues 659–679 (NEYRTREEECKTLEDEYRTRE). Acidic residues predominate over residues 680-707 (EEYETLEDEYGIPENEYETLEDEYGILE). Residues 726-737 (NKYRPREDKYGT) are compositionally biased toward basic and acidic residues. Residues 738-767 (LEEDSEDEHGTLEEDSEEDSEDEYGNPEED) show a composition bias toward acidic residues.

Belongs to the RNA polymerase beta' chain family. RpoC2 subfamily. In terms of assembly, in plastids the minimal PEP RNA polymerase catalytic core is composed of four subunits: alpha, beta, beta', and beta''. When a (nuclear-encoded) sigma factor is associated with the core the holoenzyme is formed, which can initiate transcription. Zn(2+) is required as a cofactor.

Its subcellular location is the plastid. It localises to the chloroplast. The enzyme catalyses RNA(n) + a ribonucleoside 5'-triphosphate = RNA(n+1) + diphosphate. In terms of biological role, DNA-dependent RNA polymerase catalyzes the transcription of DNA into RNA using the four ribonucleoside triphosphates as substrates. The polypeptide is DNA-directed RNA polymerase subunit beta'' (Oryza sativa (Rice)).